A 324-amino-acid chain; its full sequence is Beta-ketoacyl-[acyl-carrier-protein] synthase III (324 aa).

Catalysis depends on residues C112 and H249. An ACP-binding region spans residues 250–254; the sequence is QANRR. The active site involves N279.

This sequence belongs to the thiolase-like superfamily. FabH family. Homodimer.

Its subcellular location is the cytoplasm. The catalysed reaction is malonyl-[ACP] + acetyl-CoA + H(+) = 3-oxobutanoyl-[ACP] + CO2 + CoA. The protein operates within lipid metabolism; fatty acid biosynthesis. Catalyzes the condensation reaction of fatty acid synthesis by the addition to an acyl acceptor of two carbons from malonyl-ACP. Catalyzes the first condensation reaction which initiates fatty acid synthesis and may therefore play a role in governing the total rate of fatty acid production. Possesses both acetoacetyl-ACP synthase and acetyl transacylase activities. Its substrate specificity determines the biosynthesis of branched-chain and/or straight-chain of fatty acids. The protein is Beta-ketoacyl-[acyl-carrier-protein] synthase III of Streptococcus pyogenes serotype M4 (strain MGAS10750).